Reading from the N-terminus, the 377-residue chain is DNA replication and repair protein RecF (377 aa).

30–37 is a binding site for ATP; sequence GNNGSGKS.

This sequence belongs to the RecF family.

It is found in the cytoplasm. Its function is as follows. The RecF protein is involved in DNA metabolism; it is required for DNA replication and normal SOS inducibility. RecF binds preferentially to single-stranded, linear DNA. It also seems to bind ATP. This Colwellia psychrerythraea (strain 34H / ATCC BAA-681) (Vibrio psychroerythus) protein is DNA replication and repair protein RecF.